The chain runs to 308 residues: Protein translocase subunit SecF (308 aa).

6 consecutive transmembrane segments (helical) span residues 28 to 48 (SIIL…NFGI), 140 to 160 (IEAG…YIWV), 164 to 184 (WYFG…ALGF), 194 to 214 (LSTI…SVVI), 246 to 266 (ILTV…GGEA), and 272 to 292 (VLVF…SAPI).

Belongs to the SecD/SecF family. SecF subfamily. As to quaternary structure, forms a complex with SecD. Part of the essential Sec protein translocation apparatus which comprises SecA, SecYEG and auxiliary proteins SecDF-YajC and YidC.

The protein localises to the cell inner membrane. In terms of biological role, part of the Sec protein translocase complex. Interacts with the SecYEG preprotein conducting channel. SecDF uses the proton motive force (PMF) to complete protein translocation after the ATP-dependent function of SecA. The protein is Protein translocase subunit SecF of Rickettsia felis (strain ATCC VR-1525 / URRWXCal2) (Rickettsia azadi).